The sequence spans 208 residues: N-(5'-phosphoribosyl)anthranilate isomerase (208 aa).

It belongs to the TrpF family.

It catalyses the reaction N-(5-phospho-beta-D-ribosyl)anthranilate = 1-(2-carboxyphenylamino)-1-deoxy-D-ribulose 5-phosphate. The protein operates within amino-acid biosynthesis; L-tryptophan biosynthesis; L-tryptophan from chorismate: step 3/5. This Methanococcus maripaludis (strain C5 / ATCC BAA-1333) protein is N-(5'-phosphoribosyl)anthranilate isomerase.